A 133-amino-acid chain; its full sequence is Small ribosomal subunit protein uS8 (133 aa).

This sequence belongs to the universal ribosomal protein uS8 family. As to quaternary structure, part of the 30S ribosomal subunit. Contacts proteins S5 and S12.

In terms of biological role, one of the primary rRNA binding proteins, it binds directly to 16S rRNA central domain where it helps coordinate assembly of the platform of the 30S subunit. The protein is Small ribosomal subunit protein uS8 of Synechococcus sp. (strain RCC307).